We begin with the raw amino-acid sequence, 441 residues long: Zinc finger and BTB domain-containing protein 8A (441 aa).

Positions 24 to 92 (CDCSILVEGK…VYSGKLSLTG (69 aa)) constitute a BTB domain. 2 stretches are compositionally biased toward polar residues: residues 143–170 (NGVE…SPEQ) and 178–196 (KSWN…TQQP). A disordered region spans residues 143-251 (NGVERSSFYS…QSEEQAQIDA (109 aa)). Phosphoserine occurs at positions 161 and 167. Glycyl lysine isopeptide (Lys-Gly) (interchain with G-Cter in SUMO2) cross-links involve residues K178, K182, K191, and K199. Positions 198–208 (AKHEPRKESIK) are enriched in basic and acidic residues. Over residues 234-243 (SDSSSHVSQS) the composition is skewed to low complexity. C2H2-type zinc fingers lie at residues 282-304 (FKCP…LRCH) and 310-333 (YPCQ…RTIH). A Glycyl lysine isopeptide (Lys-Gly) (interchain with G-Cter in SUMO2) cross-link involves residue K437.

Its subcellular location is the nucleus. Functionally, may be involved in transcriptional regulation. This chain is Zinc finger and BTB domain-containing protein 8A (ZBTB8A), found in Homo sapiens (Human).